A 138-amino-acid chain; its full sequence is Acidic phospholipase A2 Cvv-E6h (138 aa).

The first 16 residues, 1 to 16 (MRTLWIVAVLLLGVEG), serve as a signal peptide directing secretion. 7 disulfide bridges follow: Cys-42–Cys-131, Cys-44–Cys-60, Cys-59–Cys-111, Cys-65–Cys-138, Cys-66–Cys-104, Cys-73–Cys-97, and Cys-91–Cys-102. Positions 43, 45, and 47 each coordinate Ca(2+). His-63 is an active-site residue. Asp-64 serves as a coordination point for Ca(2+). Residue Asp-105 is part of the active site.

The protein belongs to the phospholipase A2 family. Group II subfamily. D49 sub-subfamily. Requires Ca(2+) as cofactor. As to expression, expressed by the venom gland.

The protein resides in the secreted. The catalysed reaction is a 1,2-diacyl-sn-glycero-3-phosphocholine + H2O = a 1-acyl-sn-glycero-3-phosphocholine + a fatty acid + H(+). Functionally, snake venom phospholipase A2 (PLA2) that shows very low inhibition of ADP-induced platelet aggregation in platelet-rich plasma of human, rabbit and guinea pig. In vivo, shows efficient edema-inducing activities in rat paws. PLA2 catalyzes the calcium-dependent hydrolysis of the 2-acyl groups in 3-sn-phosphoglycerides. The protein is Acidic phospholipase A2 Cvv-E6h of Crotalus viridis viridis (Prairie rattlesnake).